The primary structure comprises 261 residues: MKILICNDDGYQASGIVALYEALKTIADVEVVAPEQNNSAKSNALTLHSPMYVQTAANGFRYINGTPADCVHIALTGLLGYRPDLVVSGINNGANMGDDTIYSGTVGAAMEGYLFGIPAIAFSQTEKGWTHIDVAAQQARNLIKQLIPSLEAVAEGAQPSVPPWLLNVNIPNLPAGQVEGFKVCRLGRRHAAERVIVQTSPRGESMYWIGGAGPAKEAGEGTDFHATTQGYVSITPLHVDLTDHERLPYWAQTAARLTHKH.

4 residues coordinate a divalent metal cation: Asp-8, Asp-9, Ser-39, and Asn-91.

Belongs to the SurE nucleotidase family. It depends on a divalent metal cation as a cofactor.

The protein resides in the cytoplasm. The catalysed reaction is a ribonucleoside 5'-phosphate + H2O = a ribonucleoside + phosphate. Functionally, nucleotidase that shows phosphatase activity on nucleoside 5'-monophosphates. The protein is 5'-nucleotidase SurE of Polaromonas naphthalenivorans (strain CJ2).